The following is a 142-amino-acid chain: Large ribosomal subunit protein uL13 (142 aa).

This sequence belongs to the universal ribosomal protein uL13 family. Part of the 50S ribosomal subunit.

Functionally, this protein is one of the early assembly proteins of the 50S ribosomal subunit, although it is not seen to bind rRNA by itself. It is important during the early stages of 50S assembly. The polypeptide is Large ribosomal subunit protein uL13 (Vibrio vulnificus (strain CMCP6)).